Reading from the N-terminus, the 183-residue chain is Acidic proline-rich protein HP43A (183 aa).

The first 14 residues, 1-14 (MLVVLLTAALLAEH), serve as a signal peptide directing secretion. Residues 22 to 183 (ISQLSEEEQQ…QGSEEQSTSL (162 aa)) are disordered. A compositionally biased stretch (acidic residues) spans 52 to 65 (SDEEGDDDGEEDGN). 5 tandem repeats follow at residues 81–100 (RPPKPGNQQGPPQQEGQQQN), 101–120 (RPPKPGNQEGPPQQEGQQQN), 121–140 (RPPKPGNQEGPPQQEGQQQN), 141–160 (RPPKPGNQEGPPQQEGQQQN), and 161–180 (RPPKPGNQEGPPQQGSEEQS). A compositionally biased stretch (low complexity) spans 86–183 (GNQQGPPQQE…QGSEEQSTSL (98 aa)).

Its subcellular location is the secreted. In Mesocricetus auratus (Golden hamster), this protein is Acidic proline-rich protein HP43A (H29).